A 165-amino-acid chain; its full sequence is NADPH-dependent 7-cyano-7-deazaguanine reductase (165 aa).

Cys56 (thioimide intermediate) is an active-site residue. Catalysis depends on Asp63, which acts as the Proton donor. Substrate is bound by residues Val78–Ser80 and His97–Glu98.

Belongs to the GTP cyclohydrolase I family. QueF type 1 subfamily.

The protein resides in the cytoplasm. It carries out the reaction 7-aminomethyl-7-carbaguanine + 2 NADP(+) = 7-cyano-7-deazaguanine + 2 NADPH + 3 H(+). It functions in the pathway tRNA modification; tRNA-queuosine biosynthesis. Its function is as follows. Catalyzes the NADPH-dependent reduction of 7-cyano-7-deazaguanine (preQ0) to 7-aminomethyl-7-deazaguanine (preQ1). The chain is NADPH-dependent 7-cyano-7-deazaguanine reductase from Geobacillus thermodenitrificans (strain NG80-2).